Reading from the N-terminus, the 1005-residue chain is Retinoblastoma-related protein (1005 aa).

Positions 404 to 605 (TPVSTAMTTA…EKGSSMYNSL (202 aa)) are domain A. The pocket stretch occupies residues 404-853 (TPVSTAMTTA…NEIFIPSVKP (450 aa)). Residues 606-722 (TIARPNLSNE…HPTRGETCAE (117 aa)) form a spacer region. The tract at residues 723–853 (TAVNLFFSKI…NEIFIPSVKP (131 aa)) is domain B. A compositionally biased stretch (polar residues) spans 863-873 (VPKNPNNQVSE). Residues 863–899 (VPKNPNNQVSETNKKDESGPCPCPGSPKVSSFPSLPD) are disordered.

This sequence belongs to the retinoblastoma protein (RB) family.

Its subcellular location is the nucleus. Its function is as follows. Regulator of biological processes that recruits a histone deacetylase to control gene transcription. May play a role in the entry into mitosis, negatively regulating the cell proliferation. Formation of stable complexes with geminiviridae replication-associated proteins may create a cellular environment which favors viral DNA replication. This Pilosella piloselloides (Glaucous king-devil hawkweed) protein is Retinoblastoma-related protein (RBR).